Consider the following 89-residue polypeptide: Small ribosomal subunit protein uS15 (89 aa).

The protein belongs to the universal ribosomal protein uS15 family. In terms of assembly, part of the 30S ribosomal subunit. Forms a bridge to the 50S subunit in the 70S ribosome, contacting the 23S rRNA.

Its function is as follows. One of the primary rRNA binding proteins, it binds directly to 16S rRNA where it helps nucleate assembly of the platform of the 30S subunit by binding and bridging several RNA helices of the 16S rRNA. Functionally, forms an intersubunit bridge (bridge B4) with the 23S rRNA of the 50S subunit in the ribosome. The protein is Small ribosomal subunit protein uS15 of Lysinibacillus sphaericus (strain C3-41).